We begin with the raw amino-acid sequence, 178 residues long: Large ribosomal subunit protein uL5 (178 aa).

This sequence belongs to the universal ribosomal protein uL5 family. Part of the 50S ribosomal subunit; part of the 5S rRNA/L5/L18/L25 subcomplex. Contacts the 5S rRNA and the P site tRNA. Forms a bridge to the 30S subunit in the 70S ribosome.

Its function is as follows. This is one of the proteins that bind and probably mediate the attachment of the 5S RNA into the large ribosomal subunit, where it forms part of the central protuberance. In the 70S ribosome it contacts protein S13 of the 30S subunit (bridge B1b), connecting the 2 subunits; this bridge is implicated in subunit movement. Contacts the P site tRNA; the 5S rRNA and some of its associated proteins might help stabilize positioning of ribosome-bound tRNAs. The polypeptide is Large ribosomal subunit protein uL5 (Psychrobacter cryohalolentis (strain ATCC BAA-1226 / DSM 17306 / VKM B-2378 / K5)).